The chain runs to 88 residues: Alpha-latrotoxin-associated low molecular weight protein (88 aa).

The signal sequence occupies residues 1 to 18 (MSKLFFVVFLCLIISVFA).

It belongs to the arthropod CHH/MIH/GIH/VIH hormone family. In terms of tissue distribution, expressed by the venom gland.

It is found in the secreted. Functionally, may increase the toxicity of alpha-latrotoxin and/or other venom components. Is non-toxic to mice and to the cockroach Periplaneta americana. The polypeptide is Alpha-latrotoxin-associated low molecular weight protein (Latrodectus tredecimguttatus (Mediterranean black widow spider)).